The following is a 1383-amino-acid chain: DNA-directed RNA polymerase subunit beta (1383 aa).

The protein belongs to the RNA polymerase beta chain family. The RNAP catalytic core consists of 2 alpha, 1 beta, 1 beta' and 1 omega subunit. When a sigma factor is associated with the core the holoenzyme is formed, which can initiate transcription.

The enzyme catalyses RNA(n) + a ribonucleoside 5'-triphosphate = RNA(n+1) + diphosphate. Its function is as follows. DNA-dependent RNA polymerase catalyzes the transcription of DNA into RNA using the four ribonucleoside triphosphates as substrates. This Bartonella henselae (strain ATCC 49882 / DSM 28221 / CCUG 30454 / Houston 1) (Rochalimaea henselae) protein is DNA-directed RNA polymerase subunit beta.